The following is a 161-amino-acid chain: 3-isopropylmalate dehydratase small subunit (161 aa).

The protein belongs to the LeuD family. LeuD type 2 subfamily. Heterodimer of LeuC and LeuD.

It catalyses the reaction (2R,3S)-3-isopropylmalate = (2S)-2-isopropylmalate. Its pathway is amino-acid biosynthesis; L-leucine biosynthesis; L-leucine from 3-methyl-2-oxobutanoate: step 2/4. Its function is as follows. Catalyzes the isomerization between 2-isopropylmalate and 3-isopropylmalate, via the formation of 2-isopropylmaleate. In Clostridium beijerinckii (strain ATCC 51743 / NCIMB 8052) (Clostridium acetobutylicum), this protein is 3-isopropylmalate dehydratase small subunit.